A 151-amino-acid polypeptide reads, in one-letter code: 3-hydroxyacyl-[acyl-carrier-protein] dehydratase FabZ (151 aa).

H54 is an active-site residue.

This sequence belongs to the thioester dehydratase family. FabZ subfamily.

Its subcellular location is the cytoplasm. It carries out the reaction a (3R)-hydroxyacyl-[ACP] = a (2E)-enoyl-[ACP] + H2O. Its function is as follows. Involved in unsaturated fatty acids biosynthesis. Catalyzes the dehydration of short chain beta-hydroxyacyl-ACPs and long chain saturated and unsaturated beta-hydroxyacyl-ACPs. In Erwinia tasmaniensis (strain DSM 17950 / CFBP 7177 / CIP 109463 / NCPPB 4357 / Et1/99), this protein is 3-hydroxyacyl-[acyl-carrier-protein] dehydratase FabZ.